The chain runs to 210 residues: Chloramphenicol acetyltransferase (210 aa).

His79 is an active-site residue.

This sequence belongs to the transferase hexapeptide repeat family.

It catalyses the reaction chloramphenicol + acetyl-CoA = chloramphenicol 3-acetate + CoA. In terms of biological role, this enzyme is an effector of chloramphenicol resistance in bacteria. The polypeptide is Chloramphenicol acetyltransferase (catB4) (Klebsiella aerogenes (Enterobacter aerogenes)).